Consider the following 309-residue polypeptide: Taste receptor type 2 member 124 (309 aa).

Residues 1–7 (MVPVLHS) are Extracellular-facing. Residues 8–28 (LSTIILIAEFVWGNLSNGLIV) traverse the membrane as a helical segment. Topologically, residues 29 to 46 (LKNCIDWINKKELSTVDQ) are cytoplasmic. A helical membrane pass occupies residues 47-67 (ILIVLAISRISLIWETLIIWV). Over 68-86 (KDQLISSITIEELKIIVFS) the chain is Extracellular. The chain crosses the membrane as a helical span at residues 87 to 107 (FILSSHFSLWLATALSIFYLF). At 108–127 (RIPNCYWQIFLYLKWRIKQL) the chain is on the cytoplasmic side. A helical transmembrane segment spans residues 128–148 (IVHMLLGSLVFLVANMIQITI). Residues 149-183 (TLEERFYQYGGNTSVNSMETEFSILIELMLFNMTM) are Extracellular-facing. N-linked (GlcNAc...) asparagine glycans are attached at residues Asn160 and Asn180. A helical transmembrane segment spans residues 184–204 (FSIIPFSLALISFLLLIFSLW). At 205–230 (KHLQKMPLNSRGDRDPSATAHRNALR) the chain is on the cytoplasmic side. Residues 231–251 (ILVSFLLLYTIYFLSLLISWV) traverse the membrane as a helical segment. Over 252–261 (AQKNQSELVH) the chain is Extracellular. Asn255 carries an N-linked (GlcNAc...) asparagine glycan. A helical membrane pass occupies residues 262–282 (IICMITSLVYPSFHSYILILG). At 283–309 (NYKLKQTSLWVMRQLGCRMKRQNTPTT) the chain is on the cytoplasmic side.

The protein belongs to the G-protein coupled receptor T2R family.

It localises to the membrane. Its function is as follows. Putative taste receptor which may play a role in the perception of bitterness. The polypeptide is Taste receptor type 2 member 124 (Mus musculus (Mouse)).